A 230-amino-acid polypeptide reads, in one-letter code: UPF0173 metal-dependent hydrolase Acid_3917 (230 aa).

The protein belongs to the UPF0173 family.

The protein is UPF0173 metal-dependent hydrolase Acid_3917 of Solibacter usitatus (strain Ellin6076).